A 298-amino-acid chain; its full sequence is HTH-type transcriptional regulator ArgP (298 aa).

Positions 4–60 (LDYRWIEALDSVVSKGSFERAAEQLFISQSAVSQRIKQLEKYLAQPVLIREQPPRPT) constitute an HTH lysR-type domain. A DNA-binding region (H-T-H motif) is located at residues 21–40 (FERAAEQLFISQSAVSQRIK).

The protein belongs to the LysR transcriptional regulatory family. As to quaternary structure, homodimer.

Controls the transcription of genes involved in arginine and lysine metabolism. This Vibrio cholerae serotype O1 (strain ATCC 39541 / Classical Ogawa 395 / O395) protein is HTH-type transcriptional regulator ArgP.